Consider the following 429-residue polypeptide: Enolase (429 aa).

Gln163 is a binding site for (2R)-2-phosphoglycerate. Residue Glu205 is the Proton donor of the active site. The Mg(2+) site is built by Asp242, Glu287, and Asp314. Positions 339, 368, 369, and 390 each coordinate (2R)-2-phosphoglycerate. Lys339 functions as the Proton acceptor in the catalytic mechanism.

The protein belongs to the enolase family. Mg(2+) is required as a cofactor.

The protein resides in the cytoplasm. Its subcellular location is the secreted. The protein localises to the cell surface. It carries out the reaction (2R)-2-phosphoglycerate = phosphoenolpyruvate + H2O. Its pathway is carbohydrate degradation; glycolysis; pyruvate from D-glyceraldehyde 3-phosphate: step 4/5. Catalyzes the reversible conversion of 2-phosphoglycerate (2-PG) into phosphoenolpyruvate (PEP). It is essential for the degradation of carbohydrates via glycolysis. The protein is Enolase of Salinibacter ruber (strain DSM 13855 / M31).